The chain runs to 616 residues: Chaperone protein HscA (616 aa).

It belongs to the heat shock protein 70 family.

Chaperone involved in the maturation of iron-sulfur cluster-containing proteins. Has a low intrinsic ATPase activity which is markedly stimulated by HscB. Involved in the maturation of IscU. The sequence is that of Chaperone protein HscA from Escherichia coli O6:H1 (strain CFT073 / ATCC 700928 / UPEC).